The chain runs to 540 residues: Keratin, type II cytoskeletal 73 (540 aa).

The head stretch occupies residues 1 to 131; it reads MSRQFTYKSG…DPEIQKVRAQ (131 aa). Residues 132–167 form a coil 1A region; sequence EREQIKVLNNKFASFIDKVRFLEQQNQVLETKWELL. The IF rod domain maps to 132-445; it reads EREQIKVLNN…KLLEGEECRM (314 aa). Residues 168–186 form a linker 1 region; it reads QQLDLNNCKNNLEPILEGY. The tract at residues 187-278 is coil 1B; it reads ISNLRKQLET…CLYEGETAQI (92 aa). Residues 279–302 form a linker 12 region; it reads QSHISDTSIILSMDNNRNLDLDSI. Positions 303-441 are coil 2; sequence IAEVRAQYEE…ATYRKLLEGE (139 aa). Residues 442 to 540 are tail; the sequence is ECRMSGEYTN…LSSPTKKTMR (99 aa). Residues 502-540 form a disordered region; the sequence is SGNCSPRGEARTRLGSASEFRDSQGKTLALSSPTKKTMR. A compositionally biased stretch (polar residues) spans 526–540; that stretch reads GKTLALSSPTKKTMR.

The protein belongs to the intermediate filament family. As to quaternary structure, heterotetramer of two type I and two type II keratins. Highly expressed in hair follicles from scalp. In hair, it is specifically present in the inner root sheath (IRS) of the hair follicle. Present in the IRS cuticle, but not in Henle or Huxley layers of the IRS. In the IRS cuticle, it is expressed between the lowermost bulb region of the cuticle and the region where Henle cells undergo abrupt terminal differentiation. Detected up to the uppermost cortex region where cuticle cells terminally differentiate (at protein level).

Functionally, has a role in hair formation. Specific component of keratin intermediate filaments in the inner root sheath (IRS) of the hair follicle. In Homo sapiens (Human), this protein is Keratin, type II cytoskeletal 73 (KRT73).